We begin with the raw amino-acid sequence, 509 residues long: Solute carrier family 2, facilitated glucose transporter member 4 (509 aa).

Over 1-24 the chain is Cytoplasmic; sequence MPSGFQQIGSEDGEPPRQRVTGTL. The segment at 7-13 is interaction with SRFBP1; that stretch reads QIGSEDG. The residue at position 10 (Ser-10) is a Phosphoserine. The helical transmembrane segment at 25 to 45 threads the bilayer; sequence VLAVFSAVLGSLQFGYNIGVI. Over 46–81 the chain is Extracellular; it reads NAPQKVIEQSYNETWLGRQGPEGPGSIPPGTLTTLW. N-linked (GlcNAc...) asparagine glycosylation occurs at Asn-57. A helical transmembrane segment spans residues 82 to 102; it reads ALSVAIFSVGGMISSFLIGII. Residues 103–111 are Cytoplasmic-facing; the sequence is SQWLGRKRA. The chain crosses the membrane as a helical span at residues 112–132; it reads MLFNNALAVLGGTLMGLAKAA. Over 133 to 142 the chain is Extracellular; that stretch reads ASYEMLILGR. The chain crosses the membrane as a helical span at residues 143 to 163; that stretch reads FFIGAYSGLTSGLVPMYVGEI. Residues 164–171 are Cytoplasmic-facing; the sequence is APTHLRGA. The chain crosses the membrane as a helical span at residues 172–192; the sequence is LGTLNQLAIVTGILIAQVLGL. Position 177 (Gln-177) interacts with D-glucose. Residues 193-200 are Extracellular-facing; the sequence is ESMLGTAT. A helical membrane pass occupies residues 201–221; that stretch reads LWPLLLGITVLPALLQMVLLP. Over 222-287 the chain is Cytoplasmic; sequence LCPESPRYLY…LLGSHTHRQP (66 aa). Cys-223 is lipidated: S-palmitoyl cysteine. Ser-274 carries the phosphoserine; by SGK1 modification. A helical transmembrane segment spans residues 288-308; that stretch reads LVIAIVLQLSQQLSGINAVFY. Residues 298–299 and Asn-304 contribute to the D-glucose site; that span reads QQ. Over 309 to 323 the chain is Extracellular; that stretch reads YSTSIFESAGVEKPA. The chain crosses the membrane as a helical span at residues 324-344; that stretch reads YATIGAGVVNTVFTLVSVFLV. Asn-333 is a binding site for D-glucose. Residues 345 to 353 are Cytoplasmic-facing; it reads ERAGRRTLH. A helical transmembrane segment spans residues 354 to 374; sequence LLGLAGMCGCAILMTVALLLL. Residues 375–384 are Extracellular-facing; sequence ERVPAMSYVS. A helical membrane pass occupies residues 385–405; it reads IVAIFGFVAFFEIGPGPIPWF. D-glucose is bound by residues Glu-396 and Trp-404. The Cytoplasmic portion of the chain corresponds to 406-417; sequence IVAELFSQGPRP. Residues 418–438 traverse the membrane as a helical segment; it reads AAMAVAGFSNWTCNFIIGMGF. At 439–445 the chain is on the extracellular side; sequence QYVADAM. A helical transmembrane segment spans residues 446–466; it reads GPYVFLLFAVLLLGFFIFTFL. Residues 467–509 are Cytoplasmic-facing; the sequence is KVPETRGRTFDQISAVFHRTPSLLEQEVKPSTELEYLGPDEHD. Thr-486 is modified (phosphothreonine). The residue at position 488 (Ser-488) is a Phosphoserine. The Dileucine internalization motif signature appears at 489–490; the sequence is LL.

This sequence belongs to the major facilitator superfamily. Sugar transporter (TC 2.A.1.1) family. Glucose transporter subfamily. As to quaternary structure, binds to DAXX. Interacts via its N-terminus with SRFBP1. Interacts with NDUFA9. Interacts with TRARG1; the interaction is required for proper SLC2A4 recycling after insulin stimulation. Post-translationally, sumoylated. Palmitoylated. Palmitoylation by ZDHHC7 controls the insulin-dependent translocation of GLUT4 to the plasma membrane.

It localises to the cell membrane. The protein localises to the endomembrane system. The protein resides in the cytoplasm. It is found in the perinuclear region. The catalysed reaction is D-glucose(out) = D-glucose(in). Its function is as follows. Insulin-regulated facilitative glucose transporter, which plays a key role in removal of glucose from circulation. Response to insulin is regulated by its intracellular localization: in the absence of insulin, it is efficiently retained intracellularly within storage compartments in muscle and fat cells. Upon insulin stimulation, translocates from these compartments to the cell surface where it transports glucose from the extracellular milieu into the cell. The protein is Solute carrier family 2, facilitated glucose transporter member 4 of Bos taurus (Bovine).